The following is a 196-amino-acid chain: UPF0200 protein MK0400 (196 aa).

Residue 7–14 (GMPGAGKG) participates in ATP binding.

The protein belongs to the UPF0200 family.

The sequence is that of UPF0200 protein MK0400 from Methanopyrus kandleri (strain AV19 / DSM 6324 / JCM 9639 / NBRC 100938).